A 436-amino-acid polypeptide reads, in one-letter code: Putative actin-fragmin kinase DDB_G0268748 (436 aa).

Positions 14–58 (DKNIDSGSSSSNIGGSSSNSSGTTNKRSSGNFNGSSASSSPSSST) are disordered. The segment covering 18 to 57 (DSGSSSSNIGGSSSNSSGTTNKRSSGNFNGSSASSSPSSS) has biased composition (low complexity).

Belongs to the protein kinase superfamily. AFK Ser/Thr protein kinase family.

This Dictyostelium discoideum (Social amoeba) protein is Putative actin-fragmin kinase DDB_G0268748.